The primary structure comprises 258 residues: 1-(5-phosphoribosyl)-5-[(5-phosphoribosylamino)methylideneamino] imidazole-4-carboxamide isomerase 2 (258 aa).

D14 acts as the Proton acceptor in catalysis. D140 functions as the Proton donor in the catalytic mechanism.

This sequence belongs to the HisA/HisF family.

It localises to the cytoplasm. It catalyses the reaction 1-(5-phospho-beta-D-ribosyl)-5-[(5-phospho-beta-D-ribosylamino)methylideneamino]imidazole-4-carboxamide = 5-[(5-phospho-1-deoxy-D-ribulos-1-ylimino)methylamino]-1-(5-phospho-beta-D-ribosyl)imidazole-4-carboxamide. Its pathway is amino-acid biosynthesis; L-histidine biosynthesis; L-histidine from 5-phospho-alpha-D-ribose 1-diphosphate: step 4/9. This is 1-(5-phosphoribosyl)-5-[(5-phosphoribosylamino)methylideneamino] imidazole-4-carboxamide isomerase 2 (hisA2) from Photorhabdus laumondii subsp. laumondii (strain DSM 15139 / CIP 105565 / TT01) (Photorhabdus luminescens subsp. laumondii).